The sequence spans 322 residues: MLFATLEHILTHISFSTISIVITIHLITLLVRELGGLRDSSEKGMIVTFFSITGFLVSRWASSGHFPLSNLYESLISLSWALYILHTIPKIQNSKNDLSTITTPSTILTQGFATSGLLTEMHQSTILVPALQSQWLMMHVSMMLLSYATLLGGPPLSAAILIIRFRNNFHFFSKKKKNVLNKTFLFSDIKYFYAKRSALKRTSVPSFPNYYKYQLTERLDSWSYRVISLGFTLLTGGILGGAVWANEAWGAYWNWDPKETWAFITWTIFAIYLHSRTHPNWKGTNSALIASIGFLIIWICYFGINLLGIGLHSYGSFTLTPK.

6 helical membrane passes run 9–29 (ILTH…LITL), 44–64 (GMIV…ASSG), 143–163 (MLLS…ILII), 226–246 (VISL…VWAN), 259–276 (ETWA…LHSR), and 289–309 (IASI…LLGI).

Belongs to the CcmF/CycK/Ccl1/NrfE/CcsA family. May interact with Ccs1.

Its subcellular location is the plastid. The protein resides in the chloroplast thylakoid membrane. Required during biogenesis of c-type cytochromes (cytochrome c6 and cytochrome f) at the step of heme attachment. This chain is Cytochrome c biogenesis protein CcsA, found in Triticum aestivum (Wheat).